We begin with the raw amino-acid sequence, 595 residues long: UvrABC system protein C (595 aa).

The 78-residue stretch at 14–91 folds into the GIY-YIG domain; that stretch reads DSPGCYIHKD…IQENKPKYNI (78 aa). One can recognise a UVR domain in the interval 196-231; the sequence is DKIVNELRDKMTKASELMEFERAAEYRDLIEGIGLL.

It belongs to the UvrC family. In terms of assembly, interacts with UvrB in an incision complex.

It localises to the cytoplasm. Functionally, the UvrABC repair system catalyzes the recognition and processing of DNA lesions. UvrC both incises the 5' and 3' sides of the lesion. The N-terminal half is responsible for the 3' incision and the C-terminal half is responsible for the 5' incision. The sequence is that of UvrABC system protein C from Streptococcus mutans serotype c (strain ATCC 700610 / UA159).